The primary structure comprises 783 residues: E3 UFM1-protein ligase 1 homolog (783 aa).

Residues 404 to 482 form a disordered region; the sequence is SNSSANFDAD…AGSSRKSVKP (79 aa). Residues 445–457 show a composition bias toward basic residues; it reads KSTKKHQRGRAAA.

The protein belongs to the UFL1 family.

E3 UFM1-protein ligase that mediates ufmylation of target proteins. The chain is E3 UFM1-protein ligase 1 homolog from Drosophila mojavensis (Fruit fly).